We begin with the raw amino-acid sequence, 389 residues long: Acetylornithine aminotransferase (389 aa).

Residues 104–105 (GT) and Phe-131 contribute to the pyridoxal 5'-phosphate site. Arg-134 contributes to the N(2)-acetyl-L-ornithine binding site. 216 to 219 (DEVQ) is a pyridoxal 5'-phosphate binding site. Lys-245 carries the post-translational modification N6-(pyridoxal phosphate)lysine. Ser-273 serves as a coordination point for N(2)-acetyl-L-ornithine. Pyridoxal 5'-phosphate is bound at residue Thr-274.

The protein belongs to the class-III pyridoxal-phosphate-dependent aminotransferase family. ArgD subfamily. Homodimer. Pyridoxal 5'-phosphate serves as cofactor.

The protein localises to the cytoplasm. The catalysed reaction is N(2)-acetyl-L-ornithine + 2-oxoglutarate = N-acetyl-L-glutamate 5-semialdehyde + L-glutamate. It participates in amino-acid biosynthesis; L-arginine biosynthesis; N(2)-acetyl-L-ornithine from L-glutamate: step 4/4. The chain is Acetylornithine aminotransferase from Methanopyrus kandleri (strain AV19 / DSM 6324 / JCM 9639 / NBRC 100938).